Consider the following 96-residue polypeptide: NADH-ubiquinone oxidoreductase chain 4L (96 aa).

A run of 3 helical transmembrane segments spans residues 1 to 21 (MNPT…AFYQ), 24 to 44 (LLSL…LMAI), and 57 to 77 (LPLI…VLLV).

The protein belongs to the complex I subunit 4L family.

The protein localises to the mitochondrion membrane. It carries out the reaction a ubiquinone + NADH + 5 H(+)(in) = a ubiquinol + NAD(+) + 4 H(+)(out). Functionally, core subunit of the mitochondrial membrane respiratory chain NADH dehydrogenase (Complex I) which catalyzes electron transfer from NADH through the respiratory chain, using ubiquinone as an electron acceptor. Part of the enzyme membrane arm which is embedded in the lipid bilayer and involved in proton translocation. The polypeptide is NADH-ubiquinone oxidoreductase chain 4L (MT-ND4L) (Myxine glutinosa (Atlantic hagfish)).